A 493-amino-acid chain; its full sequence is Inosine-5'-monophosphate dehydrogenase (493 aa).

CBS domains are found at residues 97 to 155 (VIID…NAPI) and 159 to 219 (MTSE…AKDE). NAD(+) contacts are provided by residues Asp253 and 303 to 305 (GIG). Residues Gly305 and Gly307 each coordinate K(+). Ser308 provides a ligand contact to IMP. Position 310 (Cys310) interacts with K(+). Catalysis depends on Cys310, which acts as the Thioimidate intermediate. IMP contacts are provided by residues 343-345 (DGG), 366-367 (GS), and 390-394 (YRGMG). The active-site Proton acceptor is the Arg406. Position 421 (Glu421) interacts with IMP. 3 residues coordinate K(+): Glu475, Ser476, and His477.

The protein belongs to the IMPDH/GMPR family. In terms of assembly, homotetramer. The cofactor is K(+).

It catalyses the reaction IMP + NAD(+) + H2O = XMP + NADH + H(+). Its pathway is purine metabolism; XMP biosynthesis via de novo pathway; XMP from IMP: step 1/1. Mycophenolic acid (MPA) is a non-competitive inhibitor that prevents formation of the closed enzyme conformation by binding to the same site as the amobile flap. In contrast, mizoribine monophosphate (MZP) is a competitive inhibitor that induces the closed conformation. MPA is a potent inhibitor of mammalian IMPDHs but a poor inhibitor of the bacterial enzymes. MZP is a more potent inhibitor of bacterial IMPDH. Catalyzes the conversion of inosine 5'-phosphate (IMP) to xanthosine 5'-phosphate (XMP), the first committed and rate-limiting step in the de novo synthesis of guanine nucleotides, and therefore plays an important role in the regulation of cell growth. This is Inosine-5'-monophosphate dehydrogenase from Streptococcus pyogenes serotype M1.